We begin with the raw amino-acid sequence, 833 residues long: MPTHSRSRDRYGGRDSDREARYDYDYARRRYATDDDDDYDDDELEHDLTERRYRRDGYRPPRESRARGYYERDAEGAADEELLGNERDPGPRASRSYGDDYDARRREHSRAREAPRRSERHRDRDREGRSRRRAYEDDGRHRTRDGRRDRGRESDGEARRSRRREAGRETAARKHRSSDSTNSASHLLSADALAKLGAQYEKEERRKREIAKDAAKAERKRQKKLAVVGEETRALRDPPGESHRDRTKARVASGAYLEEGRSPEMRVRHRGGGGPAMEARWRKEGSWGGTMDDSGGGRPFWKRKRWIGLGALIIILVIVIPVAVVVSKKHDNKSDPADSQGTSPGKSNLDGLSHDSIPAYAQGTYLDPWTWYDTTDFNVTFTNETVGGLSIMGLNSTWDDSARPNDNVPPLNEPFPYGSQPIRGVNLGGWLSIEPFIVPSLFDSYSSVSGIIDEWTLSKRLGSSAASTLEKHYATFITEQDFADIRDAGLDHVRIQYSYWAVATYDDDPYVAKISWRYLLRAIEYCRKYGLRVNLDPHGIPGSQNGWNHSGREGVIGWLNGTDGELNRNRSLAVHDSVSKFFAQDRYKNIVTIYGLVNEPLMLSLSIEDVLDWTTEATKLVQKNGITAYVALHDGFLNLSKWKSMLKNRPDKMLLDTHQYTIFNTGQIGLNHTAKVNLICNDWYNMIKEINSTSTGWGPTICGEWSQADTDCAKYLNNVGRGTRWEGTFSLTDSTQYCPTADTGPPCSCANANADVSKYSADYKKFLQTYAEAQMSAFETGQGWFYWTWRTESAAQWSYRTAWKNGFMPAKAYAPSFRCGDAVPDFGDLPEYY.

Over residues 1-33 (MPTHSRSRDRYGGRDSDREARYDYDYARRRYAT) the composition is skewed to basic and acidic residues. The interval 1–228 (MPTHSRSRDR…RKRQKKLAVV (228 aa)) is disordered. Topologically, residues 1–305 (MPTHSRSRDR…GGRPFWKRKR (305 aa)) are cytoplasmic. Positions 34–45 (DDDDDYDDDELE) are enriched in acidic residues. Composition is skewed to basic and acidic residues over residues 46 to 75 (HDLTERRYRRDGYRPPRESRARGYYERDAE) and 97 to 172 (YGDD…ETAA). Over residues 183-196 (SASHLLSADALAKL) the composition is skewed to low complexity. A compositionally biased stretch (basic and acidic residues) spans 200 to 217 (YEKEERRKREIAKDAAKA). The helical; Signal-anchor for type II membrane protein transmembrane segment at 306 to 326 (WIGLGALIIILVIVIPVAVVV) threads the bilayer. At 327–833 (SKKHDNKSDP…PDFGDLPEYY (507 aa)) the chain is on the extracellular side. Residues 331–353 (DNKSDPADSQGTSPGKSNLDGLS) are disordered. N332 carries an N-linked (GlcNAc...) asparagine glycan. The segment covering 337 to 346 (ADSQGTSPGK) has biased composition (polar residues). N-linked (GlcNAc...) asparagine glycosylation is found at N378, N383, N395, N548, N560, and N569. The active-site Proton donor is E599. N638, N671, and N691 each carry an N-linked (GlcNAc...) asparagine glycan. Residue E704 is the Nucleophile of the active site.

It belongs to the glycosyl hydrolase 5 (cellulase A) family.

It localises to the cell membrane. The catalysed reaction is Successive hydrolysis of beta-D-glucose units from the non-reducing ends of (1-&gt;3)-beta-D-glucans, releasing alpha-glucose.. Functionally, glucosidase involved in the degradation of cellulosic biomass. Active on lichenan. The protein is Probable glucan 1,3-beta-glucosidase D (exgD) of Aspergillus fumigatus (strain CBS 144.89 / FGSC A1163 / CEA10) (Neosartorya fumigata).